Consider the following 197-residue polypeptide: Imidazoleglycerol-phosphate dehydratase (197 aa).

It belongs to the imidazoleglycerol-phosphate dehydratase family.

The protein localises to the cytoplasm. The enzyme catalyses D-erythro-1-(imidazol-4-yl)glycerol 3-phosphate = 3-(imidazol-4-yl)-2-oxopropyl phosphate + H2O. Its pathway is amino-acid biosynthesis; L-histidine biosynthesis; L-histidine from 5-phospho-alpha-D-ribose 1-diphosphate: step 6/9. The polypeptide is Imidazoleglycerol-phosphate dehydratase (Syntrophobacter fumaroxidans (strain DSM 10017 / MPOB)).